A 1819-amino-acid polypeptide reads, in one-letter code: MRPTTPSTTESPDNFSNMKLLYFSNEFPHDDLAGLSRQLTLLSKQKQFPHLARFLDHATEAVRDEVRQLPWSLRNTIPSFDSVFNFIEHASLRKGELGASIDGVLLVVVQLGTLIKYYEENPKKYDLNTGNAALSGLGLGLLSTAAVSLSSSVSDLAVAGVEVVRLAFRLGVVVGSVSSNLESRDPTSPPVSWAAVVPDVTVDEARDELDAFYAREKMPSTSKIFISAWSHNSVTISGPPSRLKHLFRTSEFFRGQKIINLPVYGGLCHAAHLYNQEHVREVVSETDSLKELSSRASPKLTTFATSTGKRFEAETARELFEQIVAEIMTKEIRWGTVVDSVLAQAHTTSCSDIQVLVFRKSLPVYDLLTAFSSKQPGLEVSTLELIPTIPASLDNGTPVSGGSSKSSIAIVGMSCRMPGGATDTESFWNLLEKGMDVHRTIPADRFDIDTHHDPKGKAMNSSHTAYGCFIDEPGLFDAPFFNMSPREAQQTDPMQRLALVTAYEALERAGYVANRTPATSLERIGTFYGQASDDYREVNTAQEISTYFIPGGCRAFGPGRINYFFKFAGPSFSIDTACSSSLATIQTACTSLWNKDTDMAVAGGMNVLTNSDAFAGLSHGHFLTKTPNACKTWDSEADGYCRADGIGSIVMKRLEDAIADNDNIIGVIRGAATNHSAEAVSITHPHAGAQSFLSSKVLSAAGIDPFDVSYVEMHGTGTQAGDKEEMKSVTDVFAPAGPKRRSMRQPLHVGAVKANVGHGEAVAGVTALIKVLLMFQKSMIPPHVGIKNSLNPALPSDLAERNVRIPYTRQAWPREKDRKRIAAVNNFSAAGGNTMIAIEEPPLPRNIAPEDEDPRTTHAVTVSAKSKVSLEGNLKRLIAFLENNPDVRMSDLAYTTAARKYHHNHRIAVAAADVPQLKKKLSAQLNSIDSVKSISNLQPLIAFAFTGQGASYKSMDLQLFHHEPTFRSQILHLNSLALAQGFPSFLPAVDGSFPKDHAHSAVVTQMALVAIEISLAAYWASLGVVPNVVVGHSLGEYAALYVAGVLSASDAIYLVGQRARLLEERVQAGSHKMMAVRASLADIQKIAAGMPYEVACINGPRDTVLSGLSKDLDTLIEPLQKAGFKCYSLDVAYAFHSSQTDPILEEFGELAETGAIFHAPKLPVLSPLLGKVIFDEKTLNATYMKRATRECVNYLAAVETGAKLSLVDDNTLWVEIGPHPVCINMSKSSLRSVGAAVPSMRRDESNWATMAQSLSTLHCAGATIRWNEFHKPFEKGLRLLDLPTYAWNNKNYWIQYNGDWALTKGNTYYDAQKKALETAKALPAPRLSDLKTSSVQRIIEESFDGSAGTVVMQSDLMEADFLAAAHGHKMNGCGVVTSSIHADISYTLGSYLLKKMSPSSGDIAMNVADLEVVKGLVAQKNTKVPQMIQVSISTENINTGTAQLRWQNVNAQGIPDEPFATATLEYGDRSAWLSSWVPQTHLIQGRIEALETLAAQGIANRLSHNMAYLLFANNLVDYATKYRGMQSVVINGLEAFADVTLTTEKGGVWTVPPYFIDSVAHLAGFVMNVSDAIDTKANYCVTPGWSSMRFAKPLVAGAKYRSYVKMIPTVEDRSVYLGDVYVLQDNEIIGIVGGIKFRQYPRILLNRFFSAPDEASPSPNPTHGATAKAQAQPKTIAASHGDEKHFATSVQISTPSKIGHQLIVKPVAIQAPPPAGPVVVALKDPEVQGSPVVVASAAAAVDTNSVASKAISMIANEAALEQADLQDEASFAELGIDSLMSLVISEKLREELGVVVSGSLFLEYPTIGDLRSWLMEYYG.

A Starter acyltransferase (SAT) domain is found at 38–265; that stretch reads QLTLLSKQKQ…QKIINLPVYG (228 aa). In terms of domain architecture, Ketosynthase family 3 (KS3) spans 405–840; that stretch reads KSSIAIVGMS…GGNTMIAIEE (436 aa). Residues cysteine 578, histidine 714, and histidine 758 each act as for beta-ketoacyl synthase activity in the active site. Residues 943-1262 form the Malonyl-CoA:ACP transacylase (MAT) domain; it reads FAFTGQGASY…SLSTLHCAGA (320 aa). The tract at residues 1336-1476 is N-terminal hotdog fold; the sequence is QRIIEESFDG…GDRSAWLSSW (141 aa). The PKS/mFAS DH domain maps to 1336–1646; it reads QRIIEESFDG…FRQYPRILLN (311 aa). Histidine 1368 acts as the Proton acceptor; for dehydratase activity in catalysis. Positions 1404 to 1642 are dehydratase (DH) domain; that stretch reads AMNVADLEVV…GGIKFRQYPR (239 aa). The C-terminal hotdog fold stretch occupies residues 1498–1646; the sequence is IANRLSHNMA…FRQYPRILLN (149 aa). Catalysis depends on aspartate 1557, which acts as the Proton donor; for dehydratase activity. Residues 1741-1818 form the Carrier domain; sequence VDTNSVASKA…DLRSWLMEYY (78 aa). Serine 1778 is subject to O-(pantetheine 4'-phosphoryl)serine.

Requires pantetheine 4'-phosphate as cofactor.

Its pathway is secondary metabolite biosynthesis. In terms of biological role, non-reducing polyketide synthase; part of the gene cluster that mediates the biosynthesis of dibenzodioxocinones such as pestalotiollide B, a novel class of inhibitors against cholesterol ester transfer protein (CEPT). The biosynthesis initiates from condensation of acetate and malonate units catalyzed by the non-reducing PKS pks8/GME11356. Pks8/GME11356 lacks a thioesterase (TE) domain, which is important to the cyclizing of the third ring of atrochrysone carboxylic acid, and the esterase GME11355 might play the role of TE and catalyzes the cyclization reaction of the C ring. The lactamase-like protein GME11357 (or other beta-lactamases in Pestalotiopsis microspora) probably hydrolyzes the thioester bond between the ACP of pks8/GME11356 and the intermediate to release atrochrysone carboxylic acid, which is spontaneously dehydrates to form endocrocin anthrone. Endocrocin anthrone is further converted to emodin via the endocrocin intermediate. Emodin is then oxidized by several enzymes such as the Baeyer-Villiger oxidase GME11358, the oxidoreductase GME11367, the short chain dehydrogenase/reductase GME11373, as well as by other oxidoreductases from the cluster, to modify the A and C rings and open the B ring, and finally yield monodictyphenone. The prenyltransferase GME11375 may catalyze the addition reaction between the C5 side chains and the carbon bone of dibenzodioxocinones. The remaining biochemical reactions to the final product dibenzodioxocinones should be methylation catalyzed by methyltransferase GME11366 and reduction and lactonization reaction catalyzed by a series of oxidordeuctases. This Pestalotiopsis microspora protein is Non-reducing polyketide synthase 8.